A 131-amino-acid polypeptide reads, in one-letter code: Small ribosomal subunit protein uS8 (131 aa).

The protein belongs to the universal ribosomal protein uS8 family. Part of the 30S ribosomal subunit. Contacts proteins S5 and S12.

Its function is as follows. One of the primary rRNA binding proteins, it binds directly to 16S rRNA central domain where it helps coordinate assembly of the platform of the 30S subunit. The protein is Small ribosomal subunit protein uS8 of Campylobacter lari (strain RM2100 / D67 / ATCC BAA-1060).